The chain runs to 492 residues: Sestrin-1 (492 aa).

The segment at 71 to 252 is N-terminal domain; may mediate the alkylhydroperoxide reductase activity; that stretch reads FADSFAALGR…ICDITNGNHS (182 aa). Cys-130 acts as the Cysteine sulfenic acid (-SOH) intermediate in catalysis. Ser-293 and Ser-314 each carry phosphoserine. The tract at residues 321–492 is C-terminal domain; mediates TORC1 regulation; sequence PARDVSRHFE…ALRAITRYMT (172 aa). Residues 386–389, Thr-398, and Glu-463 each bind L-leucine; that span reads TYNT.

It belongs to the sestrin family. As to quaternary structure, interacts with the GATOR2 complex which is composed of MIOS, SEC13, SEH1L, WDR24 and WDR59; the interaction is negatively regulated by leucine. Interacts with RRAGA, RRAGB, RRAGC and RRAGD; may function as a guanine nucleotide dissociation inhibitor for RRAGs and regulate them. Interacts with KEAP1, RBX1 and SQSTM1; in the SQSTM1-dependent autophagic degradation of KEAP1. May interact with PRDX1.

The protein localises to the nucleus. It is found in the cytoplasm. The catalysed reaction is a hydroperoxide + L-cysteinyl-[protein] = S-hydroxy-L-cysteinyl-[protein] + an alcohol. Functionally, functions as an intracellular leucine sensor that negatively regulates the TORC1 signaling pathway through the GATOR complex. In absence of leucine, binds the GATOR subcomplex GATOR2 and prevents TORC1 signaling. Binding of leucine to SESN2 disrupts its interaction with GATOR2 thereby activating the TORC1 signaling pathway. This stress-inducible metabolic regulator may also play a role in protection against oxidative and genotoxic stresses. May positively regulate the transcription by NFE2L2 of genes involved in the response to oxidative stress by facilitating the SQSTM1-mediated autophagic degradation of KEAP1. Moreover, may prevent the accumulation of reactive oxygen species (ROS) through the alkylhydroperoxide reductase activity born by the N-terminal domain of the protein. Was originally reported to contribute to oxidative stress resistance by reducing PRDX1. However, this could not be confirmed. This chain is Sestrin-1, found in Macaca fascicularis (Crab-eating macaque).